Here is a 119-residue protein sequence, read N- to C-terminus: Large ribosomal subunit protein uL22 (119 aa).

Belongs to the universal ribosomal protein uL22 family. As to quaternary structure, part of the 50S ribosomal subunit.

Functionally, this protein binds specifically to 23S rRNA; its binding is stimulated by other ribosomal proteins, e.g. L4, L17, and L20. It is important during the early stages of 50S assembly. It makes multiple contacts with different domains of the 23S rRNA in the assembled 50S subunit and ribosome. Its function is as follows. The globular domain of the protein is located near the polypeptide exit tunnel on the outside of the subunit, while an extended beta-hairpin is found that lines the wall of the exit tunnel in the center of the 70S ribosome. This chain is Large ribosomal subunit protein uL22, found in Chlorobaculum tepidum (strain ATCC 49652 / DSM 12025 / NBRC 103806 / TLS) (Chlorobium tepidum).